Consider the following 437-residue polypeptide: MKQFRFIDLFAGIGGFRLGLEAVGGICVGSAEIDQQAIKVYRQNWPTDRSEHNLGDITTLQQLPAHDLVVGGVPCQPWSIAGKNQAFDDPRGQLWADVIRLVRINQPKAFIFENVKGLIDPRNRLCLESILDSFKAEGYNVYYKLLNSFDYGVAQNRDRVFIIGIQQKLGVPDFSFPEYSESEQRLYDILDNLQTPSIIPESLPIQRNLFGERIEVGFNKLTPRGAFNDFFILNDIRNGPTSIHSWEIYATTEREKQICTTIMRNRGNPRYGDCDGNPMSYQDIADLVVDLAESELQVLIQKRILRQYEDGKYEFFNRRLSGGIDGTYRIFLPHARFFGRLTARGMHDEIAEISVSGATAEAYKQNFIQQILIPKRHRPITVNEAARIQGFPATFKFHSNQSANFRLIGNSVAPPVIMALGKALPNDHLFEPELCEV.

The 428-residue stretch at 4 to 431 (FRFIDLFAGI…KALPNDHLFE (428 aa)) folds into the SAM-dependent MTase C5-type domain. Cysteine 75 is an active-site residue.

It belongs to the class I-like SAM-binding methyltransferase superfamily. C5-methyltransferase family.

It catalyses the reaction a 2'-deoxycytidine in DNA + S-adenosyl-L-methionine = a 5-methyl-2'-deoxycytidine in DNA + S-adenosyl-L-homocysteine + H(+). In terms of biological role, a methylase that recognizes the double-stranded sequence 5'-GGWCC-3', methylates C-? on both strands and protects the DNA from cleavage by the HgiCII endonuclease. The chain is Type II methyltransferase M.HgiCII from Herpetosiphon aurantiacus (Herpetosiphon giganteus).